Consider the following 202-residue polypeptide: tRNA (guanine-N(7)-)-methyltransferase (202 aa).

S-adenosyl-L-methionine-binding residues include Glu34, Glu59, Asp86, and Asp107. The active site involves Asp107. Substrate-binding positions include Lys111, Asp143, and 181–184; that span reads TDYE.

Belongs to the class I-like SAM-binding methyltransferase superfamily. TrmB family.

The catalysed reaction is guanosine(46) in tRNA + S-adenosyl-L-methionine = N(7)-methylguanosine(46) in tRNA + S-adenosyl-L-homocysteine. It participates in tRNA modification; N(7)-methylguanine-tRNA biosynthesis. In terms of biological role, catalyzes the formation of N(7)-methylguanine at position 46 (m7G46) in tRNA. The chain is tRNA (guanine-N(7)-)-methyltransferase from Metamycoplasma hominis (strain ATCC 23114 / DSM 25592 / NBRC 14850 / NCTC 10111 / PG21) (Mycoplasma hominis).